The sequence spans 347 residues: Microneme protein 21 (347 aa).

The protein localises to the cytoplasmic vesicle. The protein resides in the secretory vesicle. It is found in the microneme. Its subcellular location is the secreted. The polypeptide is Microneme protein 21 (Toxoplasma gondii).